A 429-amino-acid polypeptide reads, in one-letter code: Adenylosuccinate synthetase (429 aa).

Residues 12–18 (GDEGKGK) and 40–42 (GHT) each bind GTP. The active-site Proton acceptor is Asp13. The Mg(2+) site is built by Asp13 and Gly40. IMP is bound by residues 13–16 (DEGK), 38–41 (NAGH), Thr128, Arg142, Gln223, Thr238, and Arg302. The Proton donor role is filled by His41. A substrate-binding site is contributed by 298 to 304 (VNTGRKR). GTP-binding positions include Arg304, 330–332 (KLD), and 412–414 (GVG).

The protein belongs to the adenylosuccinate synthetase family. In terms of assembly, homodimer. It depends on Mg(2+) as a cofactor.

Its subcellular location is the cytoplasm. It carries out the reaction IMP + L-aspartate + GTP = N(6)-(1,2-dicarboxyethyl)-AMP + GDP + phosphate + 2 H(+). It functions in the pathway purine metabolism; AMP biosynthesis via de novo pathway; AMP from IMP: step 1/2. Functionally, plays an important role in the de novo pathway of purine nucleotide biosynthesis. Catalyzes the first committed step in the biosynthesis of AMP from IMP. The polypeptide is Adenylosuccinate synthetase (Corynebacterium efficiens (strain DSM 44549 / YS-314 / AJ 12310 / JCM 11189 / NBRC 100395)).